The sequence spans 373 residues: Stationary phase protein 5 (373 aa).

Required for survival at high temperature during stationary phase. This chain is Stationary phase protein 5 (SPG5), found in Saccharomyces cerevisiae (strain ATCC 204508 / S288c) (Baker's yeast).